The sequence spans 200 residues: GTP cyclohydrolase-2 (200 aa).

A GTP-binding site is contributed by 50-54 (RIHSE). Zn(2+)-binding residues include cysteine 55, cysteine 66, and cysteine 68. GTP-binding positions include glutamine 71, 93–95 (EGR), and threonine 115. Aspartate 127 (proton acceptor) is an active-site residue. Arginine 129 serves as the catalytic Nucleophile. Threonine 150 and lysine 155 together coordinate GTP.

This sequence belongs to the GTP cyclohydrolase II family. Requires Zn(2+) as cofactor.

It carries out the reaction GTP + 4 H2O = 2,5-diamino-6-hydroxy-4-(5-phosphoribosylamino)-pyrimidine + formate + 2 phosphate + 3 H(+). It functions in the pathway cofactor biosynthesis; riboflavin biosynthesis; 5-amino-6-(D-ribitylamino)uracil from GTP: step 1/4. Functionally, catalyzes the conversion of GTP to 2,5-diamino-6-ribosylamino-4(3H)-pyrimidinone 5'-phosphate (DARP), formate and pyrophosphate. The polypeptide is GTP cyclohydrolase-2 (Acinetobacter baylyi (strain ATCC 33305 / BD413 / ADP1)).